The following is a 129-amino-acid chain: Small ribosomal subunit protein uS13m (129 aa).

Positions 92-129 (HQDGSPLRGQRTHTNARTARKQIRKGNERRLPKEQATD) are disordered. Positions 116–129 (KGNERRLPKEQATD) are enriched in basic and acidic residues.

Belongs to the universal ribosomal protein uS13 family. As to quaternary structure, part of the small ribosomal subunit.

It localises to the mitochondrion. Its function is as follows. Located at the top of the head of the small subunit, it contacts several helices of the 18S rRNA. This chain is Small ribosomal subunit protein uS13m (RPS13), found in Zea mays (Maize).